Consider the following 1118-residue polypeptide: Error-prone DNA polymerase (1118 aa).

The disordered stretch occupies residues 1071-1118 (GPQPMGYAKEVGSDRRSRPEIGNAPARQDLATLSEEAEQVMPKGRNFQ).

Belongs to the DNA polymerase type-C family. DnaE2 subfamily.

The protein localises to the cytoplasm. It carries out the reaction DNA(n) + a 2'-deoxyribonucleoside 5'-triphosphate = DNA(n+1) + diphosphate. In terms of biological role, DNA polymerase involved in damage-induced mutagenesis and translesion synthesis (TLS). It is not the major replicative DNA polymerase. The polypeptide is Error-prone DNA polymerase (Mesorhizobium japonicum (strain LMG 29417 / CECT 9101 / MAFF 303099) (Mesorhizobium loti (strain MAFF 303099))).